The chain runs to 178 residues: Interleukin-17B (178 aa).

The signal sequence occupies residues 1-22; the sequence is MDWPHSLLFLLAISIFLGPSQP. Residues 21-44 form a disordered region; that stretch reads QPRNTKGKRKGQVRPGPLAPGPHQ. Asn-75 carries an N-linked (GlcNAc...) asparagine glycan. Cystine bridges form between Cys-121–Cys-176 and Cys-126–Cys-178.

The protein belongs to the IL-17 family.

The protein resides in the secreted. Its function is as follows. Stimulates the release of tumor necrosis factor alpha and IL-1-beta from the monocytic cell line THP-1. The polypeptide is Interleukin-17B (IL17B) (Mesocricetus auratus (Golden hamster)).